We begin with the raw amino-acid sequence, 557 residues long: NAC domain-containing protein 17 (557 aa).

The 151-residue stretch at 16–166 folds into the NAC domain; sequence SAPGFRFHPT…YYALYKLFKK (151 aa). Residues 115 to 172 mediate DNA binding; the sequence is VGLKKTLVFYRGRAPSGERTDWVMHEYTMDEDELGRCKNPQEYYALYKLFKKSGAGPK. A helical transmembrane segment spans residues 526 to 546; that stretch reads FLLLSIVGALCAIFWVLVATV.

Expressed in roots, rosette leaves, cauline leaves, shoot apex, stems and flowers.

The protein localises to the endoplasmic reticulum membrane. It localises to the nucleus. Transcriptional activator activated by proteolytic cleavage through regulated intramembrane proteolysis (RIP). Transcriptional activator that acts as a positive regulator of AOX1A during mitochondrial dysfunction. Binds directly to AOX1A promoter. Mediates mitochondrial retrograde signaling. This Arabidopsis thaliana (Mouse-ear cress) protein is NAC domain-containing protein 17.